Consider the following 455-residue polypeptide: Periplasmic pH-dependent serine endoprotease DegQ (455 aa).

The N-terminal stretch at 1-27 is a signal peptide; that stretch reads MKKQTQLLSALALSVGLTLSASFQAVA. Residues E59, H109, D139, G212, 212–214, 230–234, and 269–273 contribute to the substrate site; these read GNS, TAILA, and LGIKG. Active-site charge relay system residues include H109 and D139. Residue S214 is the Charge relay system of the active site. PDZ domains are found at residues 258–349 and 355–447; these read LIDF…LRNG and EVTL…VRGN.

Belongs to the peptidase S1C family. In terms of assembly, degQ can reversibly switch between different oligomeric forms that represent inactive (6-mer) and active (12- and 24-mer) protease states. Substrate binding triggers the conversion of the resting DegQ trimer and hexamer into catalytically active 12- and 24-mers. The conversion of 6-mer (DegQ6) into 12-mer (DegQ12) or 24-mer (DegQ24) is crucial in regulating protease activity.

The protein localises to the periplasm. It carries out the reaction Acts on substrates that are at least partially unfolded. The cleavage site P1 residue is normally between a pair of hydrophobic residues, such as Val-|-Val.. Inhibited by diisopropylfluorophosphate (DFP). Its function is as follows. DegQ could degrade transiently denatured and unfolded proteins which accumulate in the periplasm following stress conditions. DegQ is efficient with Val-Xaa and Ile-Xaa peptide bonds, suggesting a preference for a beta-branched side chain amino acids. Only unfolded proteins devoid of disulfide bonds appear capable to be cleaved, thereby preventing non-specific proteolysis of folded proteins. DegQ can substitute for the periplasmic protease DegP. The protein is Periplasmic pH-dependent serine endoprotease DegQ (degQ) of Escherichia coli (strain K12).